Consider the following 468-residue polypeptide: Cysteine--tRNA ligase (468 aa).

Residue Cys33 coordinates Zn(2+). The short motif at 35–45 is the 'HIGH' region element; sequence ATVQGLPHIGH. The Zn(2+) site is built by Cys211, His236, and Glu240. Residues 267-271 carry the 'KMSKS' region motif; it reads KMSKS. Lys270 contacts ATP.

It belongs to the class-I aminoacyl-tRNA synthetase family. Monomer. Zn(2+) serves as cofactor.

The protein resides in the cytoplasm. It carries out the reaction tRNA(Cys) + L-cysteine + ATP = L-cysteinyl-tRNA(Cys) + AMP + diphosphate. The polypeptide is Cysteine--tRNA ligase (Mycobacterium marinum (strain ATCC BAA-535 / M)).